The sequence spans 92 residues: Small ribosomal subunit protein uS19 (92 aa).

Belongs to the universal ribosomal protein uS19 family.

Functionally, protein S19 forms a complex with S13 that binds strongly to the 16S ribosomal RNA. The sequence is that of Small ribosomal subunit protein uS19 from Corynebacterium kroppenstedtii (strain DSM 44385 / JCM 11950 / CIP 105744 / CCUG 35717).